Reading from the N-terminus, the 176-residue chain is Transcriptional repressor MprA (176 aa).

Positions 26–160 constitute an HTH marR-type domain; the sequence is EILLTRLCMH…LEQITRKLLS (135 aa).

In terms of biological role, negative regulator of the multidrug operon emrAB. This chain is Transcriptional repressor MprA (mprA), found in Escherichia coli O157:H7.